The sequence spans 292 residues: Leucine-rich repeat-containing protein 10B (292 aa).

Positions M1–R20 are disordered. Residues T7–E16 show a composition bias toward acidic residues. LRR repeat units follow at residues G22–L43, R45–L66, E68–P90, R91–L112, S114–V136, A137–M158, G160–M181, R183–R204, and A205–V226. A disordered region spans residues R236–E261.

This is Leucine-rich repeat-containing protein 10B (LRRC10B) from Homo sapiens (Human).